A 672-amino-acid polypeptide reads, in one-letter code: Protein OS-9 (672 aa).

Positions 1 to 26 are cleaved as a signal peptide; the sequence is MAAEVLLSSLLGLLFLGLLLPARLTG. The region spanning 108–230 is the MRH domain; sequence APCLLKTKDW…TIRTSRLCPH (123 aa). Cysteines 110 and 123 form a disulfide. Residues tryptophan 117, tryptophan 118, and glutamine 130 each contribute to the a mannooligosaccharide derivative site. N-linked (GlcNAc...) asparagine glycosylation occurs at asparagine 177. Disulfide bonds link cysteine 181–cysteine 216 and cysteine 196–cysteine 228. Positions 182, 188, 212, and 218 each coordinate a mannooligosaccharide derivative. Disordered regions lie at residues 261-355, 372-452, 511-548, and 637-672; these read RQAE…NVQV, KAAE…LLPS, ENQSPELVQKYKKRRVVPQKPPPSPHPTEEEPEHRVRV, and EANKERQRQSELESNYRRVWGSPGGEDTGDLDEFDF. Composition is skewed to basic and acidic residues over residues 263 to 281, 294 to 310, 320 to 338, 372 to 386, and 394 to 409; these read AESKQHEEKTTEEVQDTDR, PKKEDVSPAKEEKESEL, AAAREEAQAGEQDLNHEAA, KAAEKGKPSVRREQP, and PQREAEGTKAKGKDGE. Residues 414 to 435 show a composition bias toward acidic residues; sequence MEEEDGDDEEEEEEEEEDEEEQ. The segment covering 637 to 652 has biased composition (basic and acidic residues); sequence EANKERQRQSELESNY. Residues 663–672 are compositionally biased toward acidic residues; that stretch reads DTGDLDEFDF.

This sequence belongs to the OS-9 family. Component of the HRD1 complex, which comprises at least SYNV1/HRD1, DERL1/2, FAM8A1, HERPUD1/HERP, OS9, SEL1L and UBE2J1. FAM8A1 is stabilized by interaction with SYNV1, which prevents its proteasomal degradation. OS9 and UBE2J1 recruitment to the complex may be mediated by SEL1L. Through this complex, may interact with ERLEC1 and HSPA5. Interacts (via C-terminus) with CPNE6 (via second C2 domain); this interaction occurs in a calcium-dependent manner in vitro. Interacts with CREB3. N-glycosylated. In terms of processing, intramolecular disulfide bonds.

Its subcellular location is the endoplasmic reticulum lumen. Functionally, lectin component of the HRD1 complex, which functions in endoplasmic reticulum (ER) quality control and ER-associated degradation (ERAD). Specifically recognizes and binds improperly folded glycoproteins as well as hyperglycosylated proteins, retain them in the ER, and transfers them to the ubiquitination machinery and promote their degradation. Possible targets include TRPV4 as well as hyperglycosylated HSP90B1. The polypeptide is Protein OS-9 (Os9) (Mus musculus (Mouse)).